The chain runs to 347 residues: Microneme protein 21 (347 aa).

Its subcellular location is the cytoplasmic vesicle. The protein localises to the secretory vesicle. It is found in the microneme. The protein resides in the secreted. This chain is Microneme protein 21, found in Toxoplasma gondii.